Here is a 209-residue protein sequence, read N- to C-terminus: Uracil phosphoribosyltransferase (209 aa).

5-phospho-alpha-D-ribose 1-diphosphate contacts are provided by residues Arg78, Arg103, and 130–138 (DPMFATGGT). Residues Ile193 and 198-200 (GDA) contribute to the uracil site. Asp199 provides a ligand contact to 5-phospho-alpha-D-ribose 1-diphosphate.

The protein belongs to the UPRTase family. It depends on Mg(2+) as a cofactor.

The catalysed reaction is UMP + diphosphate = 5-phospho-alpha-D-ribose 1-diphosphate + uracil. The protein operates within pyrimidine metabolism; UMP biosynthesis via salvage pathway; UMP from uracil: step 1/1. Its activity is regulated as follows. Allosterically activated by GTP. Functionally, catalyzes the conversion of uracil and 5-phospho-alpha-D-ribose 1-diphosphate (PRPP) to UMP and diphosphate. In Campylobacter fetus subsp. fetus (strain 82-40), this protein is Uracil phosphoribosyltransferase.